The sequence spans 290 residues: UPF0761 membrane protein YihY (290 aa).

Transmembrane regions (helical) follow at residues 44–64, 104–124, 140–160, 183–203, 210–230, and 244–264; these read LLSL…FPMF, VGAC…DSAL, FAVY…SLAI, ILPL…VPTT, ALVG…GFAL, and VLAV…IVLL.

This sequence belongs to the UPF0761 family.

The protein localises to the cell inner membrane. The chain is UPF0761 membrane protein YihY from Salmonella paratyphi B (strain ATCC BAA-1250 / SPB7).